The primary structure comprises 86 residues: Small ribosomal subunit protein bS16 (86 aa).

It belongs to the bacterial ribosomal protein bS16 family.

The sequence is that of Small ribosomal subunit protein bS16 from Methylacidiphilum infernorum (isolate V4) (Methylokorus infernorum (strain V4)).